The chain runs to 500 residues: MTIFDNYEVWFVIGSQHLYGAETLRQVTQHAEHVVNALNTEAKLPCKLVLKPLGTSPDEITAICRDANYDDRCAGLVVWLHTFSPAKMWINGLSILNKPLLQFHTQFNAALPWDSIDMDFMNLNQTAHGGREFGFIGARMRQQHAVVTGHWQDKEAHTRIGAWMRQAVSKQDTRQLKVCRFGDNMREVAVTDGDKVAAQIKFGFSVNTWAVGDLVQVVNSIGDGDINALIDEYESSYTLTPATQIHGDKRQNVREAARIELGMKRFLEQGGFHAFTTTFEDLHGLKQLPGLAVQRLMQQGYGFAGEGDWKTAALLRIMKVMSTGLQGGTSFMEDYTYHFEKGNDLVLGSHMLEVCPSIAVEEKLILDVQHLGIGGKEDPARLIFNTQTGPAIVASLIDLGDRYRLLVNCIDTVKTPHSLPKLPVANALWKAQPDLPTASEAWILAGGAHHTVFSHALDLNDMRQFAEIHDIEIAVIDNDTRLPAFKDALRWNEVYYGLKR.

Glutamate 306, glutamate 333, histidine 350, and histidine 450 together coordinate Mn(2+).

The protein belongs to the arabinose isomerase family. As to quaternary structure, homohexamer. The cofactor is Mn(2+).

It catalyses the reaction beta-L-arabinopyranose = L-ribulose. Its pathway is carbohydrate degradation; L-arabinose degradation via L-ribulose; D-xylulose 5-phosphate from L-arabinose (bacterial route): step 1/3. Its function is as follows. Catalyzes the conversion of L-arabinose to L-ribulose. The chain is L-arabinose isomerase from Salmonella choleraesuis (strain SC-B67).